We begin with the raw amino-acid sequence, 264 residues long: MHSERAPFFLKLAAWGGVVFLHFPILIIAAYAFNTEDAAFSFPPQGLTLRWFSVAAQRSDILDAVTLSLKVAALATLIALVLGTLAAAALWRRDFFGKNAISLLLLLPIALPGIVTGLALLTAFKTINLEPGFFTIVVGHATFCVVVVFNNVIARFRRTSWSLVEASMDLGANGWQTFRYVVLPNLSSALLAGGMLAFALSFDEIIVTTFTAGHERTLPLWLLNQLGRPRDVPVTNVVALLVMLVTTLPILGAWWLTREGDNGQ.

Residues 1 to 12 are Cytoplasmic-facing; that stretch reads MHSERAPFFLKL. Residues 13–33 traverse the membrane as a helical segment; it reads AAWGGVVFLHFPILIIAAYAF. Residues 34 to 70 lie on the Periplasmic side of the membrane; it reads NTEDAAFSFPPQGLTLRWFSVAAQRSDILDAVTLSLK. The ABC transmembrane type-1 domain maps to 65-252; that stretch reads VTLSLKVAAL…MLVTTLPILG (188 aa). A helical transmembrane segment spans residues 71–91; that stretch reads VAALATLIALVLGTLAAAALW. The Cytoplasmic portion of the chain corresponds to 92–100; sequence RRDFFGKNA. The helical transmembrane segment at 101 to 121 threads the bilayer; sequence ISLLLLLPIALPGIVTGLALL. Over 122–128 the chain is Periplasmic; that stretch reads TAFKTIN. A helical membrane pass occupies residues 129 to 149; the sequence is LEPGFFTIVVGHATFCVVVVF. The Cytoplasmic portion of the chain corresponds to 150-189; the sequence is NNVIARFRRTSWSLVEASMDLGANGWQTFRYVVLPNLSSA. The chain crosses the membrane as a helical span at residues 190–210; it reads LLAGGMLAFALSFDEIIVTTF. The Periplasmic portion of the chain corresponds to 211-236; the sequence is TAGHERTLPLWLLNQLGRPRDVPVTN. The helical transmembrane segment at 237 to 257 threads the bilayer; it reads VVALLVMLVTTLPILGAWWLT. Over 258–264 the chain is Cytoplasmic; sequence REGDNGQ.

The protein belongs to the binding-protein-dependent transport system permease family. CysTW subfamily.

The protein localises to the cell inner membrane. Functionally, probably part of the ABC transporter complex YdcSTUV. Probably responsible for the translocation of the substrate across the membrane. The protein is Inner membrane ABC transporter permease protein YdcV (ydcV) of Shigella flexneri.